Consider the following 1195-residue polypeptide: Zinc finger and BTB domain-containing protein 38 (1195 aa).

The BTB domain maps to 33-100 (CDVTIIVEDT…IYSSTVVVKR (68 aa)). K43 participates in a covalent cross-link: Glycyl lysine isopeptide (Lys-Gly) (interchain with G-Cter in SUMO2). S130 is modified (phosphoserine). Glycyl lysine isopeptide (Lys-Gly) (interchain with G-Cter in SUMO2) cross-links involve residues K145, K148, K151, and K259. The tract at residues 264 to 334 (RKPKTFSIPQ…QSSDVPGPPA (71 aa)) is disordered. Positions 270-280 (SIPQDSDSATE) are enriched in polar residues. The interval 300–523 (PAAVLTRSKS…RRYQCIFCLE (224 aa)) is interaction with CBFA2T3. At S309 the chain carries Phosphoserine. Residues 314–323 (GDVHFSREDE) are compositionally biased toward basic and acidic residues. Residues 342 to 364 (YNCSCCSKAFDSSTLLSAHMQLH) form a C2H2-type 1 zinc finger. Residues 371 to 395 (LVCKYCNKQFTTLNRLDRHEQICMR) form a C2H2-type 2; degenerate zinc finger. C2H2-type zinc fingers lie at residues 460 to 482 (YSCVVCKRSYVTLSSLRRHANVH), 488 to 510 (YPCHYCNKVFALAEYRTRHEIWH), and 516 to 539 (YQCIFCLETFMTYYILKNHQKSFH). Residues K550, K557, K754, K758, K763, K804, K814, K821, K842, K850, and K857 each participate in a glycyl lysine isopeptide (Lys-Gly) (interchain with G-Cter in SUMO2) cross-link. Residues 745 to 804 (SDPAVSQSLKDDSKPEPDKVGRFASRPKSIKEKKKTTSHTRGEIPEESNYVADPGGSLSK) are disordered. The segment covering 753 to 765 (LKDDSKPEPDKVG) has biased composition (basic and acidic residues). Disordered regions lie at residues 871-891 (QEEPLPQGNDPEPSGDSPLGL) and 903-922 (FDDASDQDSTDKPWRPYYNY). Residues K923, K964, K969, K977, K981, K991, K1017, and K1026 each participate in a glycyl lysine isopeptide (Lys-Gly) (interchain with G-Cter in SUMO2) cross-link. 5 C2H2-type zinc fingers span residues 1010–1032 (YACELCAKQFQSPSTLKMHMRCH), 1038–1060 (YQCKTCGRCFSVQGNLQKHERIH), 1066–1088 (FVCQYCNKAFTLNETLKIHERIH), 1094–1116 (YHCQFCFQRFLYLSTKRNHEQRH), and 1125–1147 (YACFQCPKICKTAAALGMHQKKH). Residues K1109, K1132, K1135, K1150, and K1183 each participate in a glycyl lysine isopeptide (Lys-Gly) (interchain with G-Cter in SUMO2) cross-link.

As to quaternary structure, interacts with CBFA2T3. Interacts with ZBTB4. Interacts with RBBP6. In terms of processing, ubiquitinated by RBBP6; leading to its degradation by the proteasome.

Its subcellular location is the nucleus. It localises to the chromosome. Its function is as follows. Transcriptional regulator with bimodal DNA-binding specificity. Binds with a higher affinity to methylated CpG dinucleotides in the consensus sequence 5'-CGCG-3' but can also bind to E-box elements (5'-CACGTG-3'). Can also bind specifically to a single methyl-CpG pair. Represses transcription in a methyl-CpG-dependent manner. Plays an important role in regulating DNA replication and common fragile sites (CFS) stability in a RBBP6- and MCM10-dependent manner; represses expression of MCM10 which plays an important role in DNA-replication. Acts as a transcriptional activator. May be involved in the differentiation and/or survival of late postmitotic neurons. The chain is Zinc finger and BTB domain-containing protein 38 from Homo sapiens (Human).